The chain runs to 82 residues: U24 protein (82 aa).

The short motif at 7-10 (PPSY) is the PPXY motif element. Residues 52-72 (FIILACLIISVILCLILILHI) form a helical membrane-spanning segment.

Interacts with host ITCH; this interaction probably mediates ITCH degradation. Interacts probably with NEDD4.

It localises to the membrane. Its function is as follows. Down-regulates of the TCR/CD3E complex and the transferrin receptor TFRC in host T-cells by blocking them from recycling back to the cell surface. The sequence is that of U24 protein from Homo sapiens (Human).